The chain runs to 199 residues: NADH-quinone oxidoreductase subunit C (199 aa).

The protein belongs to the complex I 30 kDa subunit family. NDH-1 is composed of 14 different subunits. Subunits NuoB, C, D, E, F, and G constitute the peripheral sector of the complex.

It is found in the cell inner membrane. The enzyme catalyses a quinone + NADH + 5 H(+)(in) = a quinol + NAD(+) + 4 H(+)(out). In terms of biological role, NDH-1 shuttles electrons from NADH, via FMN and iron-sulfur (Fe-S) centers, to quinones in the respiratory chain. The immediate electron acceptor for the enzyme in this species is believed to be ubiquinone. Couples the redox reaction to proton translocation (for every two electrons transferred, four hydrogen ions are translocated across the cytoplasmic membrane), and thus conserves the redox energy in a proton gradient. In Paramagnetospirillum magneticum (strain ATCC 700264 / AMB-1) (Magnetospirillum magneticum), this protein is NADH-quinone oxidoreductase subunit C.